Reading from the N-terminus, the 195-residue chain is L-rhamnose-binding lectin CSL2 (195 aa).

2 consecutive SUEL-type lectin domains span residues 1 to 97 (TRVV…YTCL) and 104 to 195 (TCEG…YTCG).

L-rhamnose binding lectin. Has hemagglutinating activity towards rabbit erythrocytes and human type B erythrocytes. Hemagglutinating activity is inhibited by smooth-type lipopolysaccharide (LPS) from S.flexneri 1A and E.coli K12, but not by rough-type LPS from S.flexneri, E.coli K12 and E.coli EH100. Agglutinates E.coli K12 and B.subtilis. This Oncorhynchus keta (Chum salmon) protein is L-rhamnose-binding lectin CSL2.